Consider the following 205-residue polypeptide: MGSSSGQSGYDLSFKILLIGDSGVGKSSLLLSFISSSVEDLAPTIGVDFKIKQMKVRGKRLKLTIWDTAGQEKFRTLTSSYFRGSQGIILVYDVTKRETFLNLADIWAKEIELYSTNHDCIKMLVGNKVDRESERKVSREEGMALAKDLNCLFHECSARTRENVNGCFEELALKIMEVPSLLEEGSSSVKRKPDYRAHQGRCCSS.

A GTP-binding site is contributed by 20-27 (GDSGVGKS). An Effector region motif is present at residues 41 to 49 (LAPTIGVDF). GTP is bound by residues 67-71 (DTAGQ), 127-130 (NKVD), and 157-158 (SA). Residues Cys202 and Cys203 are each lipidated (S-geranylgeranyl cysteine).

This sequence belongs to the small GTPase superfamily. Rab family.

The protein localises to the cell membrane. Its function is as follows. Intracellular vesicle trafficking and protein transport. The protein is Ras-related protein RABC2b (RABC2B) of Arabidopsis thaliana (Mouse-ear cress).